The chain runs to 453 residues: Phosphoglucosamine mutase (453 aa).

Serine 110 acts as the Phosphoserine intermediate in catalysis. 4 residues coordinate Mg(2+): serine 110, aspartate 247, aspartate 249, and aspartate 251. Serine 110 is modified (phosphoserine).

It belongs to the phosphohexose mutase family. Mg(2+) is required as a cofactor. In terms of processing, activated by phosphorylation.

It catalyses the reaction alpha-D-glucosamine 1-phosphate = D-glucosamine 6-phosphate. Catalyzes the conversion of glucosamine-6-phosphate to glucosamine-1-phosphate. This Tropheryma whipplei (strain TW08/27) (Whipple's bacillus) protein is Phosphoglucosamine mutase.